Reading from the N-terminus, the 421-residue chain is Testin (421 aa).

In terms of domain architecture, PET spans Met-92–Asp-199. Residues Gln-135–His-165 are disordered. Basic and acidic residues predominate over residues Leu-154 to His-165. LIM zinc-binding domains follow at residues Tyr-234–Glu-297, Pro-299–Val-359, and Gln-362–Ser-421.

This sequence belongs to the prickle / espinas / testin family. In terms of assembly, interacts via LIM domain 1 with ZYX. Interacts (via LIM domain 3) with ENAH and VASP. Interacts with ALKBH4, talin, actin, alpha-actinin, GRIP1 and PXN. Interacts (via LIM domain 2) with ACTL7A (via N-terminus). Heterodimer with ACTL7A; the heterodimer interacts with ENAH to form a heterotrimer.

The protein localises to the cytoplasm. It localises to the cell junction. The protein resides in the focal adhesion. In terms of biological role, scaffold protein that may play a role in cell adhesion, cell spreading and in the reorganization of the actin cytoskeleton. Plays a role in the regulation of cell proliferation. May act as a tumor suppressor. The polypeptide is Testin (TES) (Dasypus novemcinctus (Nine-banded armadillo)).